Consider the following 315-residue polypeptide: Olfactory receptor 10A4 (315 aa).

Over Met1–Ala26 the chain is Extracellular. Asn5 is a glycosylation site (N-linked (GlcNAc...) asparagine). Residues Leu27–Ile47 traverse the membrane as a helical segment. Topologically, residues Leu48 to Ala55 are cytoplasmic. The chain crosses the membrane as a helical span at residues Leu56 to Leu76. Residues Val77 to Thr100 are Extracellular-facing. Cys98 and Cys190 are joined by a disulfide. The chain crosses the membrane as a helical span at residues Gln101–Tyr121. At Asp122–Ile140 the chain is on the cytoplasmic side. The chain crosses the membrane as a helical span at residues Ser141–Thr161. The Extracellular portion of the chain corresponds to Thr162–Leu198. A helical membrane pass occupies residues Glu199–Ser218. Residues Tyr219 to Ala238 are Cytoplasmic-facing. The helical transmembrane segment at Phe239–Thr259 threads the bilayer. Over Tyr260–Lys272 the chain is Extracellular. The chain crosses the membrane as a helical span at residues Lys273–Ser293. Residues Arg294–Leu315 lie on the Cytoplasmic side of the membrane.

This sequence belongs to the G-protein coupled receptor 1 family. As to expression, expressed in the tongue.

It is found in the cell membrane. Odorant receptor (Potential). May be involved in taste perception. The chain is Olfactory receptor 10A4 (OR10A4) from Homo sapiens (Human).